The following is a 590-amino-acid chain: Neuronal PAS domain-containing protein 1 (590 aa).

The bHLH domain occupies 45 to 98 (QRKEKSRNAARSRRGKENLEFFELAKLLPLPGAISSQLDKASIVRLSVTYLRLR). The PAS 1 domain occupies 135 to 207 (EQHLGGHILQ…LGLRTPTPGP (73 aa)). Residues 198 to 229 (LGLRTPTPGPPTPPSVSSSSSSSSSLADTPEI) are disordered. Residues 212-222 (SVSSSSSSSSS) show a composition bias toward low complexity. One can recognise a PAS 2 domain in the interval 293 to 359 (APLAELPLHG…IRQSHVDLLD (67 aa)). The PAC domain maps to 365–408 (TGYYRWLQRAGGFVWLQSVATVAGSGKSPGEHHVLWVSHVLSQA). The segment at 425-494 (ACEEASSPGP…SHPATPRPEF (70 aa)) is disordered. A compositionally biased stretch (pro residues) spans 433 to 442 (GPEPTEPEPP). Positions 463 to 476 (IKVEPGPRETKGSE) are enriched in basic and acidic residues.

In terms of assembly, efficient DNA binding requires dimerization with another bHLH protein. Interacts with ARNT; forms a heterodimer that binds core DNA sequence 5'-[AG]CGTG-3' within the hypoxia response element (HRE) leading to a transcriptional repressor on its target gene TH.

The protein resides in the nucleus. Functionally, may control regulatory pathways relevant to schizophrenia and to psychotic illness. May play a role in late central nervous system development by modulating EPO expression in response to cellular oxygen level. Forms a heterodimer that binds core DNA sequence 5'-TACGTG-3' within the hypoxia response element (HRE) leading to transcriptional repression on its target gene TH. The chain is Neuronal PAS domain-containing protein 1 (NPAS1) from Homo sapiens (Human).